Consider the following 307-residue polypeptide: Protoheme IX farnesyltransferase (307 aa).

Helical transmembrane passes span 31-51, 52-72, 102-119, 123-145, 151-171, 179-199, 225-245, 247-267, and 281-301; these read VMSL…YSVH, PFIA…AGAI, ALSF…FMAL, LLAS…IWLK, NIVI…AAVS, VILF…LALF, ILIY…IGMS, FIYL…AGSL, and FVYS…TNTI.

This sequence belongs to the UbiA prenyltransferase family. Protoheme IX farnesyltransferase subfamily.

The protein localises to the cell inner membrane. The enzyme catalyses heme b + (2E,6E)-farnesyl diphosphate + H2O = Fe(II)-heme o + diphosphate. The protein operates within porphyrin-containing compound metabolism; heme O biosynthesis; heme O from protoheme: step 1/1. In terms of biological role, converts heme B (protoheme IX) to heme O by substitution of the vinyl group on carbon 2 of heme B porphyrin ring with a hydroxyethyl farnesyl side group. This Rickettsia canadensis (strain McKiel) protein is Protoheme IX farnesyltransferase.